A 315-amino-acid chain; its full sequence is Protein ADP-ribosyltransferase (315 aa).

Residues 13–299 (LMDEKTKQAE…TTALRNDSTT (287 aa)) form the Deacetylase sirtuin-type domain. NAD(+)-binding positions include Ala40, 123-126 (TNAD), and Gln143. Zn(2+) is bound by residues Cys151, Cys155, Cys186, and Cys189. Residues 238–240 (YTT), Asn264, Tyr268, and Ile285 contribute to the NAD(+) site.

The protein belongs to the sirtuin family. Class M subfamily. The cofactor is Zn(2+).

The catalysed reaction is L-aspartyl-[protein] + NAD(+) = 4-O-(ADP-D-ribosyl)-L-aspartyl-[protein] + nicotinamide. With respect to regulation, is inhibited by Tenovin-6 in vitro, but not by nicotinamide. Its function is as follows. Catalyzes specifically the mono-ADP-ribosylation of GcvH-L (SAV0324). This activity is dependent on prior lipoylation of the target protein. May be involved in the modulation of the response to host-derived oxidative stress. In contrast to other sirtuin classes, lacks protein deacylase activity, being unable to catalyze delipoylation, debiotinylation, deacetylation and desuccinylation of proteins. The sequence is that of Protein ADP-ribosyltransferase from Staphylococcus aureus (strain Mu50 / ATCC 700699).